The chain runs to 216 residues: Probable GH family 25 lysozyme 5 (216 aa).

The N-terminal stretch at 1 to 20 (MRFIISLLFVFTLIFNLAFS) is a signal peptide. The region spanning 21–216 (HIGIDVSSGT…GLGIDKNYWE (196 aa)) is the Ch-type lysozyme domain. Asp-25 is an active-site residue. The N-linked (GlcNAc...) asparagine glycan is linked to Asn-31. Catalysis depends on residues Asp-113 and Glu-115.

It belongs to the glycosyl hydrolase 25 family.

Its subcellular location is the secreted. It carries out the reaction Hydrolysis of (1-&gt;4)-beta-linkages between N-acetylmuramic acid and N-acetyl-D-glucosamine residues in a peptidoglycan and between N-acetyl-D-glucosamine residues in chitodextrins.. This is Probable GH family 25 lysozyme 5 from Dictyostelium discoideum (Social amoeba).